The sequence spans 403 residues: Serine/threonine transporter SstT (403 aa).

10 consecutive transmembrane segments (helical) span residues 15 to 35 (LGLI…AIVW), 49 to 69 (FISA…MTAI), 85 to 105 (LLYV…SFIF), 142 to 162 (ALLN…GMML), 183 to 203 (IVQL…AGTL), 218 to 238 (LAVI…LIVF), 246 to 268 (YPLV…SSAA), 289 to 309 (ISIP…ISVI), 317 to 337 (LGIG…SLAA), and 362 to 382 (PDVA…QDAT).

This sequence belongs to the dicarboxylate/amino acid:cation symporter (DAACS) (TC 2.A.23) family.

It is found in the cell inner membrane. The catalysed reaction is L-serine(in) + Na(+)(in) = L-serine(out) + Na(+)(out). It catalyses the reaction L-threonine(in) + Na(+)(in) = L-threonine(out) + Na(+)(out). Functionally, involved in the import of serine and threonine into the cell, with the concomitant import of sodium (symport system). The protein is Serine/threonine transporter SstT of Chromohalobacter salexigens (strain ATCC BAA-138 / DSM 3043 / CIP 106854 / NCIMB 13768 / 1H11).